The following is a 321-amino-acid chain: Lipoyl synthase (321 aa).

Positions 68, 73, 79, 94, 98, 101, and 308 each coordinate [4Fe-4S] cluster. In terms of domain architecture, Radical SAM core spans 80–297 (FNHGTATFMI…KAEALAMGFT (218 aa)).

It belongs to the radical SAM superfamily. Lipoyl synthase family. [4Fe-4S] cluster is required as a cofactor.

The protein localises to the cytoplasm. It carries out the reaction [[Fe-S] cluster scaffold protein carrying a second [4Fe-4S](2+) cluster] + N(6)-octanoyl-L-lysyl-[protein] + 2 oxidized [2Fe-2S]-[ferredoxin] + 2 S-adenosyl-L-methionine + 4 H(+) = [[Fe-S] cluster scaffold protein] + N(6)-[(R)-dihydrolipoyl]-L-lysyl-[protein] + 4 Fe(3+) + 2 hydrogen sulfide + 2 5'-deoxyadenosine + 2 L-methionine + 2 reduced [2Fe-2S]-[ferredoxin]. Its pathway is protein modification; protein lipoylation via endogenous pathway; protein N(6)-(lipoyl)lysine from octanoyl-[acyl-carrier-protein]: step 2/2. Its function is as follows. Catalyzes the radical-mediated insertion of two sulfur atoms into the C-6 and C-8 positions of the octanoyl moiety bound to the lipoyl domains of lipoate-dependent enzymes, thereby converting the octanoylated domains into lipoylated derivatives. The polypeptide is Lipoyl synthase (Salmonella paratyphi A (strain AKU_12601)).